We begin with the raw amino-acid sequence, 340 residues long: S-adenosylmethionine:tRNA ribosyltransferase-isomerase (340 aa).

The protein belongs to the QueA family. As to quaternary structure, monomer.

Its subcellular location is the cytoplasm. The enzyme catalyses 7-aminomethyl-7-carbaguanosine(34) in tRNA + S-adenosyl-L-methionine = epoxyqueuosine(34) in tRNA + adenine + L-methionine + 2 H(+). Its pathway is tRNA modification; tRNA-queuosine biosynthesis. In terms of biological role, transfers and isomerizes the ribose moiety from AdoMet to the 7-aminomethyl group of 7-deazaguanine (preQ1-tRNA) to give epoxyqueuosine (oQ-tRNA). The protein is S-adenosylmethionine:tRNA ribosyltransferase-isomerase of Macrococcus caseolyticus (strain JCSC5402) (Macrococcoides caseolyticum).